We begin with the raw amino-acid sequence, 287 residues long: Pol-RFamide neuropeptides (287 aa).

The signal sequence occupies residues 1–21 (MNLITLLVLGVSTCLIYGIEA). Positions 22–52 (DEKTSSALENEIVEILNGNFKNEKKSIETSD) are excised as a propeptide. Pyrrolidone carboxylic acid is present on Gln-53. Phe-59 carries the post-translational modification Phenylalanine amide. The propeptide occupies 62-64 (EVN). Gln-65 is subject to Pyrrolidone carboxylic acid. Phenylalanine amide is present on Phe-71. Residues 74-77 (ELSD) constitute a propeptide that is removed on maturation. A Pyrrolidone carboxylic acid modification is found at Gln-78. Position 84 is a phenylalanine amide (Phe-84). Residues 87–90 (ELSD) constitute a propeptide that is removed on maturation. A Pyrrolidone carboxylic acid modification is found at Gln-91. Phe-97 bears the Phenylalanine amide mark. Positions 100-103 (EVLD) are excised as a propeptide. Pyrrolidone carboxylic acid is present on Gln-104. A Phenylalanine amide modification is found at Phe-110. Positions 113-116 (DASN) are excised as a propeptide. Pyrrolidone carboxylic acid is present on Gln-117. Phe-123 carries the phenylalanine amide modification. Positions 126–129 (ELSD) are excised as a propeptide. The residue at position 130 (Gln-130) is a Pyrrolidone carboxylic acid. Phenylalanine amide is present on Phe-136. A propeptide spanning residues 139-142 (EGSN) is cleaved from the precursor. A Pyrrolidone carboxylic acid modification is found at Gln-143. Position 149 is a phenylalanine amide (Phe-149). Residues 152–168 (EASKNDLEKQNGRGDSD) constitute a propeptide that is removed on maturation. Gln-169 is subject to Pyrrolidone carboxylic acid. Phe-175 carries the phenylalanine amide modification. The propeptide occupies 178–181 (EARK). Gln-182 bears the Pyrrolidone carboxylic acid mark. Residue Phe-188 is modified to Phenylalanine amide. A propeptide spanning residues 192–194 (DMN) is cleaved from the precursor. Gln-195 is subject to Pyrrolidone carboxylic acid. A Histidine amide modification is found at His-201. Positions 204–207 (ETSD) are excised as a propeptide. Residue Gln-208 is modified to Pyrrolidone carboxylic acid. At Phe-214 the chain carries Phenylalanine amide. A propeptide spanning residues 217 to 220 (QLSD) is cleaved from the precursor. Residue Gln-221 is modified to Pyrrolidone carboxylic acid. Position 227 is a phenylalanine amide (Phe-227). The disordered stretch occupies residues 229–267 (REVKNDKNNPFRSRYTGDSTQLQRENNQPIEELRDNTEK). A propeptide spanning residues 230-287 (EVKNDKNNPFRSRYTGDSTQLQRENNQPIEELRDNTEKVSIENKPIMKKTSVKISKTV) is cleaved from the precursor. Residues 238–257 (PFRSRYTGDSTQLQRENNQP) are compositionally biased toward polar residues.

This sequence belongs to the FARP (FMRFamide related peptide) family. Post-translationally, the N-terminal processing sites of the Pol-RFamide peptides are acidic suggesting that cniderian nervous systems may use a variety of unconventional processing procedures.

The protein localises to the secreted. Its function is as follows. Has direct action on motoneurons, and effect includes transient inhibition followed by prolonged excitation. This Polyorchis penicillatus (Hydromedusa) protein is Pol-RFamide neuropeptides.